We begin with the raw amino-acid sequence, 444 residues long: Methylenetetrahydrofolate--tRNA-(uracil-5-)-methyltransferase TrmFO (444 aa).

Residue Gly9–Gly14 participates in FAD binding.

Belongs to the MnmG family. TrmFO subfamily. It depends on FAD as a cofactor.

The protein resides in the cytoplasm. It catalyses the reaction uridine(54) in tRNA + (6R)-5,10-methylene-5,6,7,8-tetrahydrofolate + NADH + H(+) = 5-methyluridine(54) in tRNA + (6S)-5,6,7,8-tetrahydrofolate + NAD(+). It carries out the reaction uridine(54) in tRNA + (6R)-5,10-methylene-5,6,7,8-tetrahydrofolate + NADPH + H(+) = 5-methyluridine(54) in tRNA + (6S)-5,6,7,8-tetrahydrofolate + NADP(+). In terms of biological role, catalyzes the folate-dependent formation of 5-methyl-uridine at position 54 (M-5-U54) in all tRNAs. This is Methylenetetrahydrofolate--tRNA-(uracil-5-)-methyltransferase TrmFO from Cereibacter sphaeroides (strain KD131 / KCTC 12085) (Rhodobacter sphaeroides).